The following is a 191-amino-acid chain: uncharacterized protein (191 aa).

Disordered stretches follow at residues 1–42 (MSEE…DADA) and 145–191 (QNQE…IDLD). Basic and acidic residues-rich tracts occupy residues 11-26 (PRPD…RATG) and 147-178 (QERR…RDEG).

In terms of assembly, it may form a heterotetramer of two glucokinase subunits (glk) with two ORF2 proteins.

Its function is as follows. May be involved in glucose transport or metabolism. This is an uncharacterized protein from Streptomyces coelicolor (strain ATCC BAA-471 / A3(2) / M145).